A 98-amino-acid polypeptide reads, in one-letter code: Aspartyl/glutamyl-tRNA(Asn/Gln) amidotransferase subunit C (98 aa).

The protein belongs to the GatC family. As to quaternary structure, heterotrimer of A, B and C subunits.

The catalysed reaction is L-glutamyl-tRNA(Gln) + L-glutamine + ATP + H2O = L-glutaminyl-tRNA(Gln) + L-glutamate + ADP + phosphate + H(+). It catalyses the reaction L-aspartyl-tRNA(Asn) + L-glutamine + ATP + H2O = L-asparaginyl-tRNA(Asn) + L-glutamate + ADP + phosphate + 2 H(+). Functionally, allows the formation of correctly charged Asn-tRNA(Asn) or Gln-tRNA(Gln) through the transamidation of misacylated Asp-tRNA(Asn) or Glu-tRNA(Gln) in organisms which lack either or both of asparaginyl-tRNA or glutaminyl-tRNA synthetases. The reaction takes place in the presence of glutamine and ATP through an activated phospho-Asp-tRNA(Asn) or phospho-Glu-tRNA(Gln). The sequence is that of Aspartyl/glutamyl-tRNA(Asn/Gln) amidotransferase subunit C from Paenarthrobacter aurescens (strain TC1).